Consider the following 901-residue polypeptide: HTH-type transcriptional regulator MalT (901 aa).

39–46 (SPAGYGKT) serves as a coordination point for ATP. Residues 829–894 (ELIRTSPLTQ…AAVQHAQKLL (66 aa)) enclose the HTH luxR-type domain. The H-T-H motif DNA-binding region spans 853 to 872 (NEQIAGELEVAATTIKTHIR).

This sequence belongs to the MalT family. Monomer in solution. Oligomerizes to an active state in the presence of the positive effectors ATP and maltotriose.

Its activity is regulated as follows. Activated by ATP and maltotriose, which are both required for DNA binding. Positively regulates the transcription of the maltose regulon whose gene products are responsible for uptake and catabolism of malto-oligosaccharides. Specifically binds to the promoter region of its target genes, recognizing a short DNA motif called the MalT box. The polypeptide is HTH-type transcriptional regulator MalT (Escherichia coli O6:H1 (strain CFT073 / ATCC 700928 / UPEC)).